The sequence spans 167 residues: Ribonuclease P protein subunit p20 (167 aa).

Residues 1 to 36 (MMGSNYPEHGTKPRSAKYHKQQNHRVVRKQPPRPAV) form a disordered region. A compositionally biased stretch (basic residues) spans 12–31 (KPRSAKYHKQQNHRVVRKQP).

Interacts with Smn.

It localises to the nucleus. Its subcellular location is the nucleolus. It is found in the cytoplasm. The protein resides in the cytoplasmic granule. In terms of biological role, component of ribonuclease P, a protein complex that generates mature tRNA molecules by cleaving their 5'-ends. Also a component of RNase MRP complex, which cleaves pre-rRNA sequences. This chain is Ribonuclease P protein subunit p20, found in Drosophila melanogaster (Fruit fly).